A 177-amino-acid polypeptide reads, in one-letter code: Ribosome maturation factor RimM (177 aa).

Residues Glu-92 to Pro-166 form the PRC barrel domain.

This sequence belongs to the RimM family. In terms of assembly, binds ribosomal protein uS19.

It is found in the cytoplasm. Its function is as follows. An accessory protein needed during the final step in the assembly of 30S ribosomal subunit, possibly for assembly of the head region. Essential for efficient processing of 16S rRNA. May be needed both before and after RbfA during the maturation of 16S rRNA. It has affinity for free ribosomal 30S subunits but not for 70S ribosomes. The chain is Ribosome maturation factor RimM from Azorhizobium caulinodans (strain ATCC 43989 / DSM 5975 / JCM 20966 / LMG 6465 / NBRC 14845 / NCIMB 13405 / ORS 571).